Consider the following 208-residue polypeptide: FMN-dependent NADH:quinone oxidoreductase (208 aa).

FMN contacts are provided by residues Ser9, 15-17 (SVS), 96-99 (MYNF), and 140-143 (TRGG).

This sequence belongs to the azoreductase type 1 family. In terms of assembly, homodimer. FMN serves as cofactor.

It carries out the reaction 2 a quinone + NADH + H(+) = 2 a 1,4-benzosemiquinone + NAD(+). The catalysed reaction is N,N-dimethyl-1,4-phenylenediamine + anthranilate + 2 NAD(+) = 2-(4-dimethylaminophenyl)diazenylbenzoate + 2 NADH + 2 H(+). Functionally, quinone reductase that provides resistance to thiol-specific stress caused by electrophilic quinones. Also exhibits azoreductase activity. Catalyzes the reductive cleavage of the azo bond in aromatic azo compounds to the corresponding amines. This chain is FMN-dependent NADH:quinone oxidoreductase, found in Azospirillum brasilense.